Here is a 106-residue protein sequence, read N- to C-terminus: Small ribosomal subunit protein uS10 (106 aa).

Belongs to the universal ribosomal protein uS10 family. In terms of assembly, part of the 30S ribosomal subunit.

Its function is as follows. Involved in the binding of tRNA to the ribosomes. The protein is Small ribosomal subunit protein uS10 of Pyrobaculum aerophilum (strain ATCC 51768 / DSM 7523 / JCM 9630 / CIP 104966 / NBRC 100827 / IM2).